Reading from the N-terminus, the 279-residue chain is MTTRIDTKFAELKAEGRPALVTYFMGGDPDLETSLKVMKALPKAGADVIELGMPFSDPMADGPAIQAAGLRALNAGQTLAKTLHMAAEFRKEDNTTPIVMMGYYNPIYIYGVERFLADAKASGVDGLIVVDLPSEMDAELCIPAMKAGINFIRLTTPTTDDKRLPKVLHNSSGFVYYVSMNGITGSAIADTAKVGEAVRHIKKSTDLPICVGFGVKTPEQAAAIATHADGVVVGTAIVNAIAGELDENGKAKGDPVAAATRLVHALAESVRATRLEAAQ.

Active-site proton acceptor residues include Glu-50 and Asp-61.

It belongs to the TrpA family. As to quaternary structure, tetramer of two alpha and two beta chains.

The catalysed reaction is (1S,2R)-1-C-(indol-3-yl)glycerol 3-phosphate + L-serine = D-glyceraldehyde 3-phosphate + L-tryptophan + H2O. It functions in the pathway amino-acid biosynthesis; L-tryptophan biosynthesis; L-tryptophan from chorismate: step 5/5. The alpha subunit is responsible for the aldol cleavage of indoleglycerol phosphate to indole and glyceraldehyde 3-phosphate. In Brucella anthropi (strain ATCC 49188 / DSM 6882 / CCUG 24695 / JCM 21032 / LMG 3331 / NBRC 15819 / NCTC 12168 / Alc 37) (Ochrobactrum anthropi), this protein is Tryptophan synthase alpha chain.